We begin with the raw amino-acid sequence, 108 residues long: Protein YcgL (108 aa).

A YcgL domain is found at 12–96; that stretch reads MFCVIYRSSK…PPEDLLKQHL (85 aa).

The polypeptide is Protein YcgL (Escherichia coli (strain K12 / MC4100 / BW2952)).